The sequence spans 424 residues: T-DNA border endonuclease VirD2 (424 aa).

Disordered stretches follow at residues 206–269 (AQKI…GSSI) and 321–424 (RPVT…RGGT). Residues 212 to 221 (EDTDFDETSP) show a composition bias toward acidic residues. Residues 243–261 (EPDRATRHDKQPLEQHARF) are compositionally biased toward basic and acidic residues. The span at 330–339 (TVKRQQRSKR) shows a compositional bias: basic residues. Composition is skewed to basic and acidic residues over residues 394–408 (SPKR…ELGG) and 415–424 (NRRDDGRGGT).

In terms of biological role, tumor formation by A.tumefaciens involves the transfer and integration of a defined segment (T-DNA) of Ti plasmid DNA into the plant nuclear genome. The virD operon encodes a site-specific endonuclease that cleaves at a unique site within both 24 bp direct repeats flanking the T-DNA. The polypeptide is T-DNA border endonuclease VirD2 (virD2) (Rhizobium radiobacter (Agrobacterium tumefaciens)).